The chain runs to 118 residues: Beta-2-microglobulin (118 aa).

The signal sequence occupies residues 1-21 (MGSRWGIAVLGLFCFVSCLEA). In terms of domain architecture, Ig-like C1-type spans 26–113 (PKIQVYSRHP…VHEGVKKTVK (88 aa)). Cysteines 46 and 101 form a disulfide.

It belongs to the beta-2-microglobulin family. As to quaternary structure, heterodimer of an alpha chain and a beta chain. Beta-2-microglobulin is the beta-chain of major histocompatibility complex class I molecules.

It localises to the secreted. Its function is as follows. Component of the class I major histocompatibility complex (MHC). Involved in the presentation of peptide antigens to the immune system. In Ornithorhynchus anatinus (Duckbill platypus), this protein is Beta-2-microglobulin (B2M).